Here is a 300-residue protein sequence, read N- to C-terminus: Cation-efflux pump FieF (300 aa).

Residues 24–44 (LLIKILAWWYTGSVSILAALV) form a helical membrane-spanning segment. The Zn(2+) site is built by Asp-45 and Asp-49. A run of 2 helical transmembrane segments spans residues 82 to 102 (AALA…LTSI) and 114 to 134 (PGVG…LVTF). Positions 153 and 157 each coordinate Zn(2+). 2 helical membrane passes run 156-176 (SDVM…YGWH) and 178-198 (ADAL…LRMG).

The protein belongs to the cation diffusion facilitator (CDF) transporter (TC 2.A.4) family. FieF subfamily. As to quaternary structure, homodimer.

The protein resides in the cell inner membrane. The enzyme catalyses Zn(2+)(in) + H(+)(out) = Zn(2+)(out) + H(+)(in). The catalysed reaction is Cd(2+)(in) + H(+)(out) = Cd(2+)(out) + H(+)(in). It catalyses the reaction Fe(2+)(in) + H(+)(out) = Fe(2+)(out) + H(+)(in). In terms of biological role, divalent metal cation transporter which exports Zn(2+), Cd(2+) and possibly Fe(2+). May be involved in zinc and iron detoxification by efflux. This Salmonella agona (strain SL483) protein is Cation-efflux pump FieF.